A 157-amino-acid chain; its full sequence is Ribosomal RNA large subunit methyltransferase H (157 aa).

S-adenosyl-L-methionine is bound by residues Leu-74, Gly-106, and 125 to 130; that span reads LSDMTL.

The protein belongs to the RNA methyltransferase RlmH family. In terms of assembly, homodimer.

It is found in the cytoplasm. It catalyses the reaction pseudouridine(1915) in 23S rRNA + S-adenosyl-L-methionine = N(3)-methylpseudouridine(1915) in 23S rRNA + S-adenosyl-L-homocysteine + H(+). Its function is as follows. Specifically methylates the pseudouridine at position 1915 (m3Psi1915) in 23S rRNA. The protein is Ribosomal RNA large subunit methyltransferase H of Desulfovibrio desulfuricans (strain ATCC 27774 / DSM 6949 / MB).